Reading from the N-terminus, the 543-residue chain is Kelch repeat and BTB domain-containing protein 4 (543 aa).

Residues 70–137 (ADVTISVEGR…IYHGTVKLRA (68 aa)) enclose the BTB domain. In terms of domain architecture, BACK spans 172–264 (CLQVMWLADR…SLKEIGENVH (93 aa)). Kelch repeat units lie at residues 264–310 (HIYL…KHGG), 311–353 (DLYV…SVPG), 356–403 (AIYS…NLNG), 405–455 (IYLL…VHKD), and 457–505 (VFIV…YVFR).

In terms of assembly, component of the BCR(KBTBD4) E3 ubiquitin ligase complex, at least composed of CUL3, KBTBD4 and RBX1.

Its function is as follows. Substrate-specific adapter of a BCR (BTB-CUL3-RBX1) E3 ubiquitin ligase complex which targets CoREST corepressor complex components RCOR1, KDM1A/LSD1 and HDAC2 for proteasomal degradation. RCOR1 is likely to be the primary target while degradation of KDM1A and HDAC2 is likely due to their association with RCOR1. Also targets RCOR3, MIER2 and MIER3 for proteasomal degradation as well as associated proteins ZNF217 and RREB1. Degradation is dependent on the presence of an ELM2 domain in the target proteins. The polypeptide is Kelch repeat and BTB domain-containing protein 4 (KBTBD4) (Macaca fascicularis (Crab-eating macaque)).